A 467-amino-acid chain; its full sequence is Cysteine--tRNA ligase (467 aa).

A Zn(2+)-binding site is contributed by C29. Residues 31 to 41 (PTVYNYVHIGN) carry the 'HIGH' region motif. Zn(2+) contacts are provided by C209, H234, and E238. Positions 267-271 (KMSKS) match the 'KMSKS' region motif. Position 270 (K270) interacts with ATP.

Belongs to the class-I aminoacyl-tRNA synthetase family. Monomer. It depends on Zn(2+) as a cofactor.

It localises to the cytoplasm. The enzyme catalyses tRNA(Cys) + L-cysteine + ATP = L-cysteinyl-tRNA(Cys) + AMP + diphosphate. This Xylella fastidiosa (strain Temecula1 / ATCC 700964) protein is Cysteine--tRNA ligase.